The following is a 745-amino-acid chain: Chitin synthase D (745 aa).

The next 5 membrane-spanning stretches (helical) occupy residues 26–46 (LAHRGIFLPVMIVTLPLPVHL), 55–75 (VLMLQWFAFGMFSVLLIIPWL), 412–432 (TTALLFFIIALSLITTSSSIN), 434–454 (LPVGFIAISLGLNYVLMFYLG), and 464–484 (LFPLMFILNPFFNWLYMVYGI). Disordered stretches follow at residues 613 to 635 (TGDNDNMKPYPDRQPRDTSSLHQ) and 672 to 745 (ILPH…ESMV). The span at 707 to 720 (NASTRGSMEGNTPE) shows a compositional bias: polar residues.

Belongs to the chitin synthase family. Class VI subfamily.

The protein resides in the cell membrane. It carries out the reaction [(1-&gt;4)-N-acetyl-beta-D-glucosaminyl](n) + UDP-N-acetyl-alpha-D-glucosamine = [(1-&gt;4)-N-acetyl-beta-D-glucosaminyl](n+1) + UDP + H(+). Functionally, polymerizes chitin, a structural polymer of the cell wall and septum, by transferring the sugar moiety of UDP-GlcNAc to the non-reducing end of the growing chitin polymer. The protein is Chitin synthase D (chsD) of Aspergillus fumigatus (strain ATCC MYA-4609 / CBS 101355 / FGSC A1100 / Af293) (Neosartorya fumigata).